Here is a 266-residue protein sequence, read N- to C-terminus: Glucosamine-6-phosphate deaminase (266 aa).

Aspartate 72 functions as the Proton acceptor; for enolization step in the catalytic mechanism. Aspartate 141 acts as the For ring-opening step in catalysis. Histidine 143 serves as the catalytic Proton acceptor; for ring-opening step. Catalysis depends on glutamate 148, which acts as the For ring-opening step.

It belongs to the glucosamine/galactosamine-6-phosphate isomerase family. NagB subfamily. In terms of assembly, homohexamer.

The catalysed reaction is alpha-D-glucosamine 6-phosphate + H2O = beta-D-fructose 6-phosphate + NH4(+). Its pathway is amino-sugar metabolism; N-acetylneuraminate degradation; D-fructose 6-phosphate from N-acetylneuraminate: step 5/5. With respect to regulation, allosterically activated by N-acetylglucosamine 6-phosphate (GlcNAc6P). In terms of biological role, catalyzes the reversible isomerization-deamination of glucosamine 6-phosphate (GlcN6P) to form fructose 6-phosphate (Fru6P) and ammonium ion. The sequence is that of Glucosamine-6-phosphate deaminase from Citrobacter koseri (strain ATCC BAA-895 / CDC 4225-83 / SGSC4696).